Consider the following 614-residue polypeptide: Subtilin transport ATP-binding protein SpaT (614 aa).

A run of 5 helical transmembrane segments spans residues 34–54 (FLKL…SLYI), 69–89 (VSIV…SELI), 147–167 (IIQA…SIAF), 175–195 (VSLL…KIGQ), and 267–287 (IAVQ…AFAG). An ABC transmembrane type-1 domain is found at 34–320 (FLKLIRFSII…IMTSIYSIYN (287 aa)). Positions 353 to 593 (VVFQNVSFIY…CPLYKKMDES (241 aa)) constitute an ABC transporter domain. Residue 387–394 (GPNGSGKK) coordinates ATP.

The protein belongs to the ABC transporter superfamily.

The protein localises to the cell membrane. Its function is as follows. Probably implicated in the export process of the lantibiotic subtilin. This Bacillus subtilis protein is Subtilin transport ATP-binding protein SpaT (spaT).